Here is a 433-residue protein sequence, read N- to C-terminus: D-amino acid dehydrogenase (433 aa).

Residue 3–17 (VVILGSGVVGVASAW) coordinates FAD.

The protein belongs to the DadA oxidoreductase family. FAD is required as a cofactor.

It catalyses the reaction a D-alpha-amino acid + A + H2O = a 2-oxocarboxylate + AH2 + NH4(+). It participates in amino-acid degradation; D-alanine degradation; NH(3) and pyruvate from D-alanine: step 1/1. Oxidative deamination of D-amino acids. This is D-amino acid dehydrogenase from Erwinia tasmaniensis (strain DSM 17950 / CFBP 7177 / CIP 109463 / NCPPB 4357 / Et1/99).